We begin with the raw amino-acid sequence, 221 residues long: Probable hydrogenase maturation factor HypB (221 aa).

The tract at residues 35-196 (AFDFMGAIGS…KRINPDAEVV (162 aa)) is G-domain. Cys95 and His96 together coordinate Ni(2+). Positions 95, 96, 100, 104, and 127 each coordinate Zn(2+). Ni(2+) is bound at residue Cys127.

This sequence belongs to the SIMIBI class G3E GTPase family. HypB/HupM subfamily. As to quaternary structure, homodimer.

Its function is as follows. Involved in the maturation of [NiFe] hydrogenases. Required for nickel insertion into the metal center of the hydrogenase. Exhibits a low intrinsic GTPase activity, which is essential for nickel insertion. This chain is Probable hydrogenase maturation factor HypB, found in Methanocaldococcus jannaschii (strain ATCC 43067 / DSM 2661 / JAL-1 / JCM 10045 / NBRC 100440) (Methanococcus jannaschii).